The following is a 609-amino-acid chain: Proteasome-associated ATPase (609 aa).

Residues 1 to 24 (MADSERSEAFGTPDDTPLSSNDAA) form a disordered region. Residues 19–96 (SSNDAAELEQ…LREEVDRLGQ (78 aa)) adopt a coiled-coil conformation. Residue 296 to 301 (GCGKTL) participates in ATP binding. A docks into pockets in the proteasome alpha-ring region spans residues 608-609 (YL).

Belongs to the AAA ATPase family. In terms of assembly, homohexamer. Assembles into a hexameric ring structure that caps the 20S proteasome core. Strongly interacts with the prokaryotic ubiquitin-like protein Pup through a hydrophobic interface; the interacting region of ARC lies in its N-terminal coiled-coil domain. There is one Pup binding site per ARC hexamer ring. Upon ATP-binding, the C-terminus of ARC interacts with the alpha-rings of the proteasome core, possibly by binding to the intersubunit pockets.

It functions in the pathway protein degradation; proteasomal Pup-dependent pathway. Its function is as follows. ATPase which is responsible for recognizing, binding, unfolding and translocation of pupylated proteins into the bacterial 20S proteasome core particle. May be essential for opening the gate of the 20S proteasome via an interaction with its C-terminus, thereby allowing substrate entry and access to the site of proteolysis. Thus, the C-termini of the proteasomal ATPase may function like a 'key in a lock' to induce gate opening and therefore regulate proteolysis. The polypeptide is Proteasome-associated ATPase (Mycobacterium ulcerans (strain Agy99)).